The chain runs to 1035 residues: FERM domain-containing protein 4B (1035 aa).

An FERM domain is found at 59–361; it reads RHCQVHLLDD…SQHQFYLDRK (303 aa). Serine 372 is modified (phosphoserine). Coiled coils occupy residues 414-451 and 535-559; these read QDSEGMEEQKREKILELKKKEKLLQEKLLQKVEELKKI and KQDYTDAVKRLQEIENSINEYRIRC. Residues 542–972 form a necessary for adherens junction and tight junction localization region; that stretch reads VKRLQEIENS…TQLTIGLSEY (431 aa). 4 disordered regions span residues 563-615, 631-699, 713-738, and 754-798; these read PSQK…ILPP, NEQF…LESQ, FTLSKSQRSSSTEILDDGSSYTSQSS, and TQTL…SKGQ. The segment covering 571-590 has biased composition (low complexity); the sequence is PPEDIIPSESSSLSDTTTYD. The segment covering 594–607 has biased composition (polar residues); the sequence is DSFTLAGQRPSSVP. Serine 609 bears the Phosphoserine mark. Over residues 635–644 the composition is skewed to basic and acidic residues; that stretch reads MDTRHSREML. Composition is skewed to polar residues over residues 664–699 and 715–725; these read MPTTPVLTRNAYSSSHLEPDSSSQHCRQRSGSLESQ and LSKSQRSSSTE. At serine 698 the chain carries Phosphoserine. The segment covering 762–771 has biased composition (basic residues); the sequence is RGRRRSKKHS. Residues 772–782 show a composition bias toward polar residues; the sequence is VSTSNSGSMPN. Lysine 883 participates in a covalent cross-link: Glycyl lysine isopeptide (Lys-Gly) (interchain with G-Cter in SUMO2). Disordered regions lie at residues 906 to 926, 939 to 958, and 994 to 1035; these read RASGQKDQGHSPQTSFDSDRG, PCSPSSRASSYSSVSSTNAS, and PSRQ…GTLV. The span at 907–921 shows a compositional bias: polar residues; the sequence is ASGQKDQGHSPQTSF. Serine 916 bears the Phosphoserine mark. Low complexity predominate over residues 941-958; the sequence is SPSSRASSYSSVSSTNAS. The span at 1019 to 1035 shows a compositional bias: basic and acidic residues; sequence SEQRLFWHEDSKPGTLV. Residue lysine 1030 forms a Glycyl lysine isopeptide (Lys-Gly) (interchain with G-Cter in SUMO2) linkage.

Interacts with CYTH3. Interacts with PARD3. Interacts with CYTH1. As to expression, isoform 1 is expressed in the brain. Isoform 2 is expressed in the lung (at protein level).

The protein resides in the cytoplasm. It is found in the cytoskeleton. Its subcellular location is the cell junction. It localises to the tight junction. The protein localises to the adherens junction. Functionally, member of GRP1 signaling complexes that are acutely recruited to plasma membrane ruffles in response to insulin receptor signaling. May function as a scaffolding protein that regulates epithelial cell polarity by connecting ARF6 activation with the PAR3 complex. Plays a redundant role with FRMD4A in epithelial polarization. The sequence is that of FERM domain-containing protein 4B (Frmd4b) from Mus musculus (Mouse).